We begin with the raw amino-acid sequence, 413 residues long: Na(+)-translocating NADH-quinone reductase subunit B (413 aa).

3 consecutive transmembrane segments (helical) span residues 55–75, 128–148, and 163–183; these read IMIM…YNAG, FLPI…LFCM, and ILFA…LGIT. The residue at position 235 (Thr-235) is an FMN phosphoryl threonine. The next 5 membrane-spanning stretches (helical) occupy residues 267–287, 296–316, 324–344, 357–377, and 380–400; these read IPGS…AMIV, IIAG…VIGS, MPWH…FMAT, WWYG…NPAY, and GMML…HVVI.

Belongs to the NqrB/RnfD family. Composed of six subunits; NqrA, NqrB, NqrC, NqrD, NqrE and NqrF. The cofactor is FMN.

The protein resides in the cell inner membrane. The catalysed reaction is a ubiquinone + n Na(+)(in) + NADH + H(+) = a ubiquinol + n Na(+)(out) + NAD(+). NQR complex catalyzes the reduction of ubiquinone-1 to ubiquinol by two successive reactions, coupled with the transport of Na(+) ions from the cytoplasm to the periplasm. NqrA to NqrE are probably involved in the second step, the conversion of ubisemiquinone to ubiquinol. This is Na(+)-translocating NADH-quinone reductase subunit B from Vibrio campbellii (strain ATCC BAA-1116).